The primary structure comprises 369 residues: Septin-5 (369 aa).

At Thr13 the chain carries Phosphothreonine. The region spanning 41 to 314 (KGFDFTLMVA…ENYRAHCIQQ (274 aa)) is the Septin-type G domain. Residues 51–58 (GESGLGKS) are G1 motif. GTP is bound by residues 51-58 (GESGLGKS), Thr85, and Gly111. The interval 108 to 111 (DTPG) is G3 motif. Residue Arg168 is modified to Omega-N-methylarginine. Residues 189–192 (AKAD) form a G4 motif region. 190 to 198 (KADCLVPSE) lines the GTP pocket. The residue at position 225 (Ser225) is a Phosphoserine. Residues Gly248 and Arg263 each contribute to the GTP site. Residue Ser327 is modified to Phosphoserine. At Thr336 the chain carries Phosphothreonine. The stretch at 338–369 (DSETEKLIRMKDEELRRMQEMLQKMKQRMQDQ) forms a coiled coil.

Belongs to the TRAFAC class TrmE-Era-EngA-EngB-Septin-like GTPase superfamily. Septin GTPase family. In terms of assembly, septins polymerize into heterooligomeric protein complexes that form filaments, and can associate with cellular membranes, actin filaments and microtubules. GTPase activity is required for filament formation. Interacts with SEPTIN2 and SEPTIN5. In platelets, associated with a complex containing STX4. Interacts with PRKN; this interaction leads to SEPTIN5 ubiquitination and degradation. Interacts with DYRK1A. Interacts with STX1A; in the cerebellar cortex. Phosphorylated by DYRK1A. In terms of tissue distribution, expressed in brain and testis and at lower level in heart, spleen, lung and kidney.

Its subcellular location is the cytoplasm. It localises to the cytoskeleton. Functionally, filament-forming cytoskeletal GTPase. May play a role in cytokinesis (Potential). May play a role in platelet secretion. The protein is Septin-5 of Rattus norvegicus (Rat).